The chain runs to 222 residues: Adapter protein MecA (222 aa).

Belongs to the MecA family. As to quaternary structure, homodimer.

In terms of biological role, enables the recognition and targeting of unfolded and aggregated proteins to the ClpC protease or to other proteins involved in proteolysis. The protein is Adapter protein MecA of Lysinibacillus sphaericus (strain C3-41).